Here is a 163-residue protein sequence, read N- to C-terminus: Putative 4-hydroxy-4-methyl-2-oxoglutarate aldolase (163 aa).

Substrate contacts are provided by residues 75 to 78 (GDQL) and R97. D98 provides a ligand contact to a divalent metal cation.

The protein belongs to the class II aldolase/RraA-like family. Homotrimer. A divalent metal cation is required as a cofactor.

The catalysed reaction is 4-hydroxy-4-methyl-2-oxoglutarate = 2 pyruvate. The enzyme catalyses oxaloacetate + H(+) = pyruvate + CO2. In terms of biological role, catalyzes the aldol cleavage of 4-hydroxy-4-methyl-2-oxoglutarate (HMG) into 2 molecules of pyruvate. Also contains a secondary oxaloacetate (OAA) decarboxylase activity due to the common pyruvate enolate transition state formed following C-C bond cleavage in the retro-aldol and decarboxylation reactions. This chain is Putative 4-hydroxy-4-methyl-2-oxoglutarate aldolase, found in Photobacterium profundum (strain SS9).